A 250-amino-acid chain; its full sequence is uncharacterized protein (250 aa).

The protein belongs to the glycosyltransferase 2 family.

This is an uncharacterized protein from Haemophilus influenzae (strain ATCC 51907 / DSM 11121 / KW20 / Rd).